Consider the following 475-residue polypeptide: Eukaryotic translation initiation factor 3 subunit L (475 aa).

The PCI domain occupies 257-451 (DAIRMFSHIL…DLDYAMQGDL (195 aa)).

This sequence belongs to the eIF-3 subunit L family. As to quaternary structure, component of the eukaryotic translation initiation factor 3 (eIF-3) complex.

It is found in the cytoplasm. In terms of biological role, component of the eukaryotic translation initiation factor 3 (eIF-3) complex, which is involved in protein synthesis of a specialized repertoire of mRNAs and, together with other initiation factors, stimulates binding of mRNA and methionyl-tRNAi to the 40S ribosome. The eIF-3 complex specifically targets and initiates translation of a subset of mRNAs involved in cell proliferation. The protein is Eukaryotic translation initiation factor 3 subunit L of Botryotinia fuckeliana (strain B05.10) (Noble rot fungus).